Reading from the N-terminus, the 610-residue chain is DNA mismatch repair protein MutL (610 aa).

Belongs to the DNA mismatch repair MutL/HexB family.

Its function is as follows. This protein is involved in the repair of mismatches in DNA. It is required for dam-dependent methyl-directed DNA mismatch repair. May act as a 'molecular matchmaker', a protein that promotes the formation of a stable complex between two or more DNA-binding proteins in an ATP-dependent manner without itself being part of a final effector complex. This Rickettsia canadensis (strain McKiel) protein is DNA mismatch repair protein MutL.